A 168-amino-acid polypeptide reads, in one-letter code: Phospholipase A and acyltransferase 1 (168 aa).

Residues 1-138 (MAFNDCFSLN…GEGVSEQANR (138 aa)) lie on the Cytoplasmic side of the membrane. Residues 20 to 135 (LIEVFRPGYQ…LRYGEGVSEQ (116 aa)) enclose the LRAT domain. His-30 is an active-site residue. Cys-119 serves as the catalytic Acyl-thioester intermediate. The chain crosses the membrane as a helical span at residues 139 to 159 (AISTVEFVTAAVGVFSFLGLF). Topologically, residues 160–168 (PKGQRAKYY) are lumenal.

This sequence belongs to the H-rev107 family. Abundantly expressed in testis, skeletal muscle, brain, and heart. As to expression, highly expressed in the testis, skeletal muscle, brain, heart, and thyroid.

Its subcellular location is the membrane. It is found in the cytoplasm. The protein resides in the nucleus. The enzyme catalyses a 1,2-diacyl-sn-glycero-3-phosphocholine + H2O = a 1-acyl-sn-glycero-3-phosphocholine + a fatty acid + H(+). It catalyses the reaction a 1,2-diacyl-sn-glycero-3-phosphocholine + H2O = a 2-acyl-sn-glycero-3-phosphocholine + a fatty acid + H(+). The catalysed reaction is 1,2-dihexadecanoyl-sn-glycero-3-phosphocholine + H2O = 2-hexadecanoyl-sn-glycero-3-phosphocholine + hexadecanoate + H(+). It carries out the reaction 1,2-dihexadecanoyl-sn-glycero-3-phosphocholine + H2O = 1-hexadecanoyl-sn-glycero-3-phosphocholine + hexadecanoate + H(+). The enzyme catalyses 1-hexadecanoyl-2-(5Z,8Z,11Z,14Z-eicosatetraenoyl)-sn-glycero-3-phosphoethanolamine + H2O = 2-(5Z,8Z,11Z,14Z)-eicosatetraenoyl-sn-glycero-3-phosphoethanolamine + hexadecanoate + H(+). It catalyses the reaction 1-hexadecanoyl-2-(5Z,8Z,11Z,14Z-eicosatetraenoyl)-sn-glycero-3-phosphoethanolamine + H2O = 1-hexadecanoyl-sn-glycero-3-phosphoethanolamine + (5Z,8Z,11Z,14Z)-eicosatetraenoate + H(+). The catalysed reaction is 1,2-di-(9Z-octadecenoyl)-sn-glycero-3-phosphoethanolamine + 1,2-dihexadecanoyl-sn-glycero-3-phosphocholine = hexadecanoyl-sn-glycero-3-phosphocholine + N-hexadecanoyl-1,2-di-(9Z-octadecenoyl)-sn-glycero-3-phosphoethanolamine + H(+). It carries out the reaction 1,2-dihexadecanoyl-sn-glycero-3-phosphocholine + a 2-acyl-sn-glycero-3-phosphocholine = a 1-hexadecanoyl-2-acyl-sn-glycero-3-phosphocholine + 2-hexadecanoyl-sn-glycero-3-phosphocholine. Functionally, exhibits both phospholipase A1/2 and acyltransferase activities. Shows phospholipase A1 (PLA1) and A2 (PLA2) activity, catalyzing the calcium-independent release of fatty acids from the sn-1 or sn-2 position of glycerophospholipids. Shows O-acyltransferase activity, catalyzing the transfer of a fatty acyl group from glycerophospholipid to the hydroxyl group of lysophospholipid. Shows N-acyltransferase activity, catalyzing the calcium-independent transfer of a fatty acyl group at the sn-1 position of phosphatidylcholine (PC) and other glycerophospholipids to the primary amine of phosphatidylethanolamine (PE), forming N-acylphosphatidylethanolamine (NAPE) which serves as precursor for N-acylethanolamines (NAEs). This Homo sapiens (Human) protein is Phospholipase A and acyltransferase 1.